The primary structure comprises 289 residues: Splicing factor C9orf78 (289 aa).

Basic residues predominate over residues 1–12 (MPVVRKIFRRRR). The segment at 1–27 (MPVVRKIFRRRRGDSESEEDEQDSEEV) is disordered. The segment at 5-58 (RKIFRRRRGDSESEEDEQDSEEVRLKLEETREVQNLRKRPNGVSAVALLVGEKV) is interaction with SNRNP200. S15 and S17 each carry phosphoserine. Position 147 is a phosphotyrosine (Y147). Positions 232-283 (LNAPIRRNKEEPKARPLRVGDTEKPEPERSPPNRKRPANEKATDDYHYEKFK) are enriched in basic and acidic residues. Residues 232–289 (LNAPIRRNKEEPKARPLRVGDTEKPEPERSPPNRKRPANEKATDDYHYEKFKKMNRRY) are disordered. T253 is subject to Phosphothreonine. S261 carries the phosphoserine modification.

This sequence belongs to the TLS1 family. Component of the spliceosome. Interacts with SNRNP200; the interaction is direct. Interacts with PRPF8.

The protein resides in the nucleus. Its subcellular location is the chromosome. It is found in the centromere. Plays a role in pre-mRNA splicing by promoting usage of the upstream 3'-splice site at alternative NAGNAG splice sites; these are sites featuring alternative acceptor motifs separated by only a few nucleotides. May also modulate exon inclusion events. Plays a role in spliceosomal remodeling by displacing WBP4 from SNRNP200 and may act to inhibit SNRNP200 helicase activity. Binds U5 snRNA. Required for proper chromosome segregation. Not required for splicing of shelterin components. In Homo sapiens (Human), this protein is Splicing factor C9orf78 (C9orf78).